We begin with the raw amino-acid sequence, 35 residues long: Photosystem II reaction center protein T (35 aa).

A helical membrane pass occupies residues 3–23 (ALVYTFLLVSTLGIIFFAIFF).

The protein belongs to the PsbT family. As to quaternary structure, PSII is composed of 1 copy each of membrane proteins PsbA, PsbB, PsbC, PsbD, PsbE, PsbF, PsbH, PsbI, PsbJ, PsbK, PsbL, PsbM, PsbT, PsbY, PsbZ, Psb30/Ycf12, at least 3 peripheral proteins of the oxygen-evolving complex and a large number of cofactors. It forms dimeric complexes.

The protein resides in the plastid. It localises to the chloroplast thylakoid membrane. Its function is as follows. Found at the monomer-monomer interface of the photosystem II (PS II) dimer, plays a role in assembly and dimerization of PSII. PSII is a light-driven water plastoquinone oxidoreductase, using light energy to abstract electrons from H(2)O, generating a proton gradient subsequently used for ATP formation. The polypeptide is Photosystem II reaction center protein T (Pisum sativum (Garden pea)).